A 199-amino-acid chain; its full sequence is Recombination protein RecR (199 aa).

A C4-type zinc finger spans residues 58–73 (CSVCGNLTDTDVCPLC). Residues 81-176 (SVICVVEDPR…KTTRIAHGIP (96 aa)) enclose the Toprim domain.

This sequence belongs to the RecR family.

May play a role in DNA repair. It seems to be involved in an RecBC-independent recombinational process of DNA repair. It may act with RecF and RecO. This is Recombination protein RecR from Acetivibrio thermocellus (strain ATCC 27405 / DSM 1237 / JCM 9322 / NBRC 103400 / NCIMB 10682 / NRRL B-4536 / VPI 7372) (Clostridium thermocellum).